The chain runs to 550 residues: Glucose-6-phosphate isomerase 1 (550 aa).

Glu-355 acts as the Proton donor in catalysis. Residues His-386 and Lys-512 contribute to the active site.

Belongs to the GPI family.

The protein resides in the cytoplasm. The enzyme catalyses alpha-D-glucose 6-phosphate = beta-D-fructose 6-phosphate. Its pathway is carbohydrate biosynthesis; gluconeogenesis. The protein operates within carbohydrate degradation; glycolysis; D-glyceraldehyde 3-phosphate and glycerone phosphate from D-glucose: step 2/4. Catalyzes the reversible isomerization of glucose-6-phosphate to fructose-6-phosphate. The chain is Glucose-6-phosphate isomerase 1 from Rhodococcus jostii (strain RHA1).